Here is a 369-residue protein sequence, read N- to C-terminus: Capsid protein (369 aa).

The protein localises to the host nucleus. Its subcellular location is the virion. In terms of biological role, self-assembles to form the virion icosahedral capsid. This is Capsid protein from Avon-Heathcote Estuary associated kieseladnavirus (AHEaBV).